Reading from the N-terminus, the 591-residue chain is Aspartate--tRNA(Asp/Asn) ligase (591 aa).

Glu-176 contacts L-aspartate. An aspartate region spans residues 200–203 (QLFK). An L-aspartate-binding site is contributed by Arg-222. ATP-binding positions include 222-224 (RDE) and Gln-231. His-450 is a binding site for L-aspartate. Residue Glu-484 coordinates ATP. An L-aspartate-binding site is contributed by Arg-491. 536–539 (GLDR) provides a ligand contact to ATP.

The protein belongs to the class-II aminoacyl-tRNA synthetase family. Type 1 subfamily. In terms of assembly, homodimer.

The protein localises to the cytoplasm. The enzyme catalyses tRNA(Asx) + L-aspartate + ATP = L-aspartyl-tRNA(Asx) + AMP + diphosphate. In terms of biological role, aspartyl-tRNA synthetase with relaxed tRNA specificity since it is able to aspartylate not only its cognate tRNA(Asp) but also tRNA(Asn). Reaction proceeds in two steps: L-aspartate is first activated by ATP to form Asp-AMP and then transferred to the acceptor end of tRNA(Asp/Asn). This is Aspartate--tRNA(Asp/Asn) ligase from Bacillus anthracis (strain A0248).